The primary structure comprises 524 residues: MAEGGGGARRRAPALLEAARARYESLHISDDVFGESGPDSGGNPFYSTSAASRSSSAASSDDEREPPGPPGAAPPPPRAPDAQEPEEDEAGAGWSAALRDRPPPRFEDTGGPTRKMPPSASAVDFFQLFVPDNVLKNMVVQTNMYAKKFQERFGSDGAWVEVTLTEMKAFLGYMISTSISHCESVLSIWSGGFYSNRSLALVMSQARFEKILKYFHVVAFRSSQTTHGLYKVQPFLDSLQNSFDSAFRPSQTQVLHEPLIDEDPVFIATCTERELRKRKKRKFSLWVRQCSSTGFIIQIYVHLKEGGGPDGLDALKNKPQLHSMVARSLCRNAAGKNYIIFTGPSITSLTLFEEFEKQGIYCCGLLRARKSDCTGLPLSMLTNPATPPARGQYQIKMKGNMSLICWYNKGHFRFLTNAYSPVQQGVIIKRKSGEIPCPLAVEAFAAHLSYICRYDDKYSKYFISHKPNKTWQQVFWFAISIAINNAYILYKMSDAYHVKRYSRAQFGERLVRELLGLEDASPTH.

The interval 30–117 is disordered; the sequence is DDVFGESGPD…DTGGPTRKMP (88 aa). The segment covering 47 to 59 has biased composition (low complexity); sequence STSAASRSSSAAS. Pro residues predominate over residues 67 to 79; it reads PGPPGAAPPPPRA. Basic and acidic residues predominate over residues 98-108; sequence LRDRPPPRFED. S521 is modified (phosphoserine).

It is found in the nucleus. In terms of biological role, transposase that mediates sequence-specific genomic rearrangements. Can induce genomic rearrangements that inactivate the HPRT1 gene. This chain is PiggyBac transposable element-derived protein 5 (PGBD5), found in Homo sapiens (Human).